The primary structure comprises 91 residues: Probable Fe(2+)-trafficking protein (91 aa).

The protein belongs to the Fe(2+)-trafficking protein family.

Its function is as follows. Could be a mediator in iron transactions between iron acquisition and iron-requiring processes, such as synthesis and/or repair of Fe-S clusters in biosynthetic enzymes. This Glaesserella parasuis serovar 5 (strain SH0165) (Haemophilus parasuis) protein is Probable Fe(2+)-trafficking protein.